Reading from the N-terminus, the 1070-residue chain is DNA-directed RNA polymerase subunit beta (1070 aa).

The protein belongs to the RNA polymerase beta chain family. In terms of assembly, in plastids the minimal PEP RNA polymerase catalytic core is composed of four subunits: alpha, beta, beta', and beta''. When a (nuclear-encoded) sigma factor is associated with the core the holoenzyme is formed, which can initiate transcription.

The protein localises to the plastid. It is found in the chloroplast. The enzyme catalyses RNA(n) + a ribonucleoside 5'-triphosphate = RNA(n+1) + diphosphate. Its function is as follows. DNA-dependent RNA polymerase catalyzes the transcription of DNA into RNA using the four ribonucleoside triphosphates as substrates. The chain is DNA-directed RNA polymerase subunit beta from Gossypium barbadense (Sea Island cotton).